The sequence spans 229 residues: Cytochrome c oxidase subunit 2 (229 aa).

Residues 1 to 14 are Mitochondrial intermembrane-facing; it reads MANPTHLGFQDAMS. The helical transmembrane segment at 15-45 threads the bilayer; sequence PLMEELLYFHDHTLMILFLISSLVFYMIFAL. The Mitochondrial matrix portion of the chain corresponds to 46–59; that stretch reads LFPKLYYPNTSDVQ. A helical transmembrane segment spans residues 60–87; that stretch reads EVEVIWTVLPAIVLISIALPSLRTLYLM. The Mitochondrial intermembrane portion of the chain corresponds to 88–229; that stretch reads DETNNPCLTI…QLWLEDSILS (142 aa). Positions 161, 196, 198, 200, 204, and 207 each coordinate Cu cation. Glu-198 is a binding site for Mg(2+).

This sequence belongs to the cytochrome c oxidase subunit 2 family. As to quaternary structure, component of the cytochrome c oxidase (complex IV, CIV), a multisubunit enzyme composed of 14 subunits. The complex is composed of a catalytic core of 3 subunits MT-CO1, MT-CO2 and MT-CO3, encoded in the mitochondrial DNA, and 11 supernumerary subunits COX4I, COX5A, COX5B, COX6A, COX6B, COX6C, COX7A, COX7B, COX7C, COX8 and NDUFA4, which are encoded in the nuclear genome. The complex exists as a monomer or a dimer and forms supercomplexes (SCs) in the inner mitochondrial membrane with NADH-ubiquinone oxidoreductase (complex I, CI) and ubiquinol-cytochrome c oxidoreductase (cytochrome b-c1 complex, complex III, CIII), resulting in different assemblies (supercomplex SCI(1)III(2)IV(1) and megacomplex MCI(2)III(2)IV(2)). Found in a complex with TMEM177, COA6, COX18, COX20, SCO1 and SCO2. Interacts with TMEM177 in a COX20-dependent manner. Interacts with COX20. Interacts with COX16. Cu cation is required as a cofactor.

Its subcellular location is the mitochondrion inner membrane. It catalyses the reaction 4 Fe(II)-[cytochrome c] + O2 + 8 H(+)(in) = 4 Fe(III)-[cytochrome c] + 2 H2O + 4 H(+)(out). Functionally, component of the cytochrome c oxidase, the last enzyme in the mitochondrial electron transport chain which drives oxidative phosphorylation. The respiratory chain contains 3 multisubunit complexes succinate dehydrogenase (complex II, CII), ubiquinol-cytochrome c oxidoreductase (cytochrome b-c1 complex, complex III, CIII) and cytochrome c oxidase (complex IV, CIV), that cooperate to transfer electrons derived from NADH and succinate to molecular oxygen, creating an electrochemical gradient over the inner membrane that drives transmembrane transport and the ATP synthase. Cytochrome c oxidase is the component of the respiratory chain that catalyzes the reduction of oxygen to water. Electrons originating from reduced cytochrome c in the intermembrane space (IMS) are transferred via the dinuclear copper A center (CU(A)) of subunit 2 and heme A of subunit 1 to the active site in subunit 1, a binuclear center (BNC) formed by heme A3 and copper B (CU(B)). The BNC reduces molecular oxygen to 2 water molecules using 4 electrons from cytochrome c in the IMS and 4 protons from the mitochondrial matrix. The sequence is that of Cytochrome c oxidase subunit 2 (MT-CO2) from Alligator mississippiensis (American alligator).